The sequence spans 288 residues: uncharacterized protein (288 aa).

The next 4 helical transmembrane spans lie at 43 to 63 (LFTL…NYII), 190 to 210 (LFIF…FLLE), 243 to 263 (GIPI…SILI), and 265 to 285 (LLQM…NKSL).

It is found in the cell membrane. This is an uncharacterized protein from Rickettsia prowazekii (strain Madrid E).